We begin with the raw amino-acid sequence, 67 residues long: Conotoxin Im3.1 (67 aa).

Positions 1-20 (MMSTLVVLLTICLLMLPLTA) are cleaved as a signal peptide. Residues 21-52 (RQLDADQLADQLAERMEDISADQNRWFDPVKR) constitute a propeptide that is removed on maturation. 3 cysteine pairs are disulfide-bonded: Cys53/Cys63, Cys54/Cys61, and Cys59/Cys64.

Belongs to the conotoxin M superfamily. In terms of tissue distribution, expressed by the venom duct.

The protein localises to the secreted. Its function is as follows. Probable neurotoxin. The polypeptide is Conotoxin Im3.1 (Conus imperialis (Imperial cone)).